Here is a 230-residue protein sequence, read N- to C-terminus: MAMVGRSLLLLLLLVTLAAGHGVVVVVAFDPNPLQDFCVADPTSKVRVNGLPCKDPAAVTADDFFFSGVGEPAAGGGRGATASRRYGFTARSVDIPGLNTLGASAARVDVAPGGVFPPHYHPRASETAVVLAGAVYFGFVTSYPDSRVVAKVLRRGDVFAVPQGLVHFLHNNGSEPAALYASLSSQNPGLVLVADALLAAPLPVDLVAKTLLTDEATVDKIRANFIVHRS.

The N-terminal stretch at 1-20 (MAMVGRSLLLLLLLVTLAAG) is a signal peptide. Cys38 and Cys53 are joined by a disulfide. In terms of domain architecture, Cupin type-1 spans 86-219 (YGFTARSVDI…TLLTDEATVD (134 aa)). Residues His119, His121, Glu126, and His167 each coordinate Mn(2+). A glycan (N-linked (GlcNAc...) asparagine) is linked at Asn172.

The protein belongs to the germin family. As to quaternary structure, oligomer (believed to be a pentamer but probably hexamer).

The protein localises to the secreted. It is found in the extracellular space. The protein resides in the apoplast. Its function is as follows. May play a role in plant defense. Probably has no oxalate oxidase activity even if the active site is conserved. The protein is Germin-like protein 5-1 of Oryza sativa subsp. japonica (Rice).